The following is a 75-amino-acid chain: Meucin-49 (75 aa).

The first 22 residues, 1 to 22, serve as a signal peptide directing secretion; the sequence is MNKKILLVIFIVTMLIVDEVNS.

This sequence belongs to the non-disulfide-bridged peptide (NDBP) superfamily. Long chain multifunctional peptide (group 2) family. Expressed by the venom gland.

It localises to the secreted. In terms of biological role, insecticidal toxin and antimicrobial peptide with potent activity against both Gram-negative and -positive bacteria, as well as against fungi. Acts by disrupting bacterial membrane integrity. Shows broad-spectrum and highly potent bactericidal activities against the Gram-positive bacteria B.cereus, B.megaterium, B.subtilis, M.luteus, S.aureus, S.epidermidis, S.warneri, S.griseus, S.scabiei, S.mutans, S.salivarius, and S.sanguinis. Also exhibits a wide spectrum of activity against the Gram-negative bacteria A.faecalis, E.coli, P.aeruginosa, P.solanacearum, S.enterica, S.marcescens, and S.maltophilia. Also shows antimicrobial activities against the fungal strains Aspergillus flavus, A.fumigatus, A.nidulans, A.niger, Beauveria bassiana, and Saccharomyces cerevisiae. Its antibiotic activity is potentiated by other antibacterial peptides such as MeuNaTxbeta-4. Also induces cytolysis on mice, lizards and birds erythrocytes. The chain is Meucin-49 from Mesobuthus eupeus (Lesser Asian scorpion).